A 708-amino-acid polypeptide reads, in one-letter code: Capsid scaffolding protein (708 aa).

Catalysis depends on charge relay system residues H63, S132, and H157. 3 disordered regions span residues 270–339 (SAER…MSHP), 455–565 (HPSY…QQQR), and 593–620 (ALPS…GGGE). Positions 284–293 (PAAGARVPSS) are enriched in low complexity. A compositionally biased stretch (pro residues) spans 294 to 311 (SPSPPVEPPSPVQPPALP). A compositionally biased stretch (low complexity) spans 326-339 (SPSEPAEAASMSHP). An interaction with pAP region spans residues 333-352 (AASMSHPLSAAVPAATAPPG). Basic residues predominate over residues 498 to 513 (KQHRHGGSGGHNKRRK). 2 short sequence motifs (nuclear localization signal) span residues 510–515 (KRRKET) and 537–543 (RARKRLK). The span at 593–615 (ALPSAASSSPTTTTVCTPTSELT) shows a compositional bias: low complexity. The interval 688 to 708 (PPKDMVDLNRRIFVAALNKLE) is interaction with major capsid protein.

This sequence belongs to the herpesviridae capsid scaffolding protein family. In terms of assembly, homomultimer. Interacts with major capsid protein. As to quaternary structure, exists in a monomer-dimer equilibrium with the dimer being the active species. In terms of processing, capsid scaffolding protein is cleaved by assemblin after formation of the spherical procapsid. As a result, the capsid obtains its mature, icosahedral shape. Cleavages occur at two or more sites: release (R-site) and maturation (M-site).

Its subcellular location is the host cytoplasm. It localises to the host nucleus. The enzyme catalyses Cleaves -Ala-|-Ser- and -Ala-|-Ala- bonds in the scaffold protein.. In terms of biological role, acts as a scaffold protein by binding major capsid protein in the cytoplasm, inducing the nuclear localization of both proteins. Multimerizes in the nucleus such as major capsid protein forms the icosahedral T=16 capsid. Autocatalytic cleavage releases the assembly protein, and subsequently abolishes interaction with major capsid protein. Cleavages products are evicted from the capsid before or during DNA packaging. Functionally, protease that plays an essential role in virion assembly within the nucleus. Catalyzes the cleavage of the assembly protein after formation of the spherical procapsid. By that cleavage, the capsid matures and gains its icosahedral shape. The cleavage sites seem to include -Ala-Ser-, -Ala-Ala-, as well as Ala-Thr bonds. Assemblin and cleavages products are evicted from the capsid before or during DNA packaging. Its function is as follows. Plays a major role in capsid assembly. Acts as a scaffold protein by binding major capsid protein. Multimerizes in the nucleus such as major capsid protein forms the icosahedral T=16 capsid. Cleaved by assemblin after capsid completion. The cleavages products are evicted from the capsid before or during DNA packaging. This chain is Capsid scaffolding protein (UL80), found in Homo sapiens (Human).